Reading from the N-terminus, the 541-residue chain is Atrial natriuretic peptide receptor 3 (541 aa).

An N-terminal signal peptide occupies residues 1–26 (MPSLLVLTFSPCVLLGWALLAGGTGG). The Extracellular segment spans residues 27 to 481 (GGVGGGGGGA…PCKSSGGLEE (455 aa)). The N-linked (GlcNAc...) (complex) asparagine glycan is linked to N86. Residues S106, V135, and C136 each contribute to the chloride site. Cystine bridges form between C108/C136 and C213/C261. The N-linked (GlcNAc...) (high mannose) asparagine glycan is linked to N293. The N-linked (GlcNAc...) (complex) asparagine glycan is linked to N394. Residues 482 to 504 (SAVTGIVVGALLGAGLLMAFYFF) form a helical membrane-spanning segment. Residues 505 to 541 (RKKYRITIERRTQQEESNLGKHRELREDSIRSHFSVA) lie on the Cytoplasmic side of the membrane.

It belongs to the ANF receptor family. Homodimer; disulfide-linked. Dimers can also be formed through the C-terminal cysteine of isoform 2. Interacts with OSTN.

It localises to the cell membrane. Its function is as follows. Receptor for the natriuretic peptide hormones, binding with similar affinities atrial natriuretic peptide NPPA/ANP, brain natriuretic peptide NPPB/BNP, and C-type natriuretic peptide NPPC/CNP. May function as a clearance receptor for NPPA, NPPB and NPPC, regulating their local concentrations and effects. Acts as a regulator of osteoblast differentiation and bone growth by binding to its ligand osteocrin, thereby preventing binding between NPR3/NPR-C and natriuretic peptides, leading to increase cGMP production. This chain is Atrial natriuretic peptide receptor 3 (NPR3), found in Homo sapiens (Human).